A 23-amino-acid chain; its full sequence is Malate dehydrogenase (23 aa).

Residue Asn7 coordinates NAD(+). A substrate-binding site is contributed by Arg23.

This sequence belongs to the LDH/MDH superfamily. MDH type 1 family. In terms of assembly, homodimer.

The catalysed reaction is (S)-malate + NAD(+) = oxaloacetate + NADH + H(+). This is Malate dehydrogenase from Pseudotsuga menziesii (Douglas-fir).